The following is a 217-amino-acid chain: Small ribosomal subunit protein uS3 (217 aa).

In terms of domain architecture, KH type-2 spans 40–110 (IRDLINKWFN…EVYINIHEVR (71 aa)).

This sequence belongs to the universal ribosomal protein uS3 family. As to quaternary structure, part of the 30S ribosomal subunit. Forms a tight complex with proteins S10 and S14.

Binds the lower part of the 30S subunit head. Binds mRNA in the 70S ribosome, positioning it for translation. The sequence is that of Small ribosomal subunit protein uS3 from Rickettsia prowazekii (strain Madrid E).